Consider the following 416-residue polypeptide: ATP-dependent Clp protease ATP-binding subunit ClpX (416 aa).

Residues 1-54 form the ClpX-type ZB domain; sequence MFKFGDEKGQLKCSFCGKSQEQVRKLVAGPGVYICDECIELCNEIIEEELNDDV. The Zn(2+) site is built by cysteine 13, cysteine 16, cysteine 35, and cysteine 38. 117-124 contributes to the ATP binding site; sequence PTGCGKTL.

This sequence belongs to the ClpX chaperone family. As to quaternary structure, component of the ClpX-ClpP complex. Forms a hexameric ring that, in the presence of ATP, binds to fourteen ClpP subunits assembled into a disk-like structure with a central cavity, resembling the structure of eukaryotic proteasomes.

ATP-dependent specificity component of the Clp protease. It directs the protease to specific substrates. Can perform chaperone functions in the absence of ClpP. The polypeptide is ATP-dependent Clp protease ATP-binding subunit ClpX (Halothermothrix orenii (strain H 168 / OCM 544 / DSM 9562)).